The primary structure comprises 2475 residues: Polyprotein pp220 (2475 aa).

G2 carries N-myristoyl glycine; by host lipidation. Residues R2184 to T2211 adopt a coiled-coil conformation.

It belongs to the asfivirus polyprotein pp220 family. Specific enzymatic cleavages in vivo by the viral pS273R protease yield mature proteins.

The protein localises to the host cytoplasm. Its subcellular location is the host perinuclear region. It localises to the virion. It is found in the host nucleus. Essential for the core assembly. Its myristoyl moiety may function as a membrane-anchoring signal to bind the developing core shell to the inner viral envelope. Functionally, the structural protein p34 is a component of the virus core shell. In terms of biological role, the structural protein p14 is a component of the virus core shell. Its function is as follows. The structural protein p37 is a component of the virus core shell. The structural protein p150 is a component of the virus core shell. In African swine fever virus (isolate Tick/Malawi/Lil 20-1/1983) (ASFV), this protein is Polyprotein pp220.